A 360-amino-acid polypeptide reads, in one-letter code: Photosystem II protein D1 1 (360 aa).

The next 3 helical transmembrane spans lie at 29–46, 118–133, and 142–156; these read YVGW…TATT, HFLI…EWEL, and WICV…AATA. A chlorophyll a-binding site is contributed by His-118. Residue Tyr-126 participates in pheophytin a binding. 2 residues coordinate [CaMn4O5] cluster: Asp-170 and Glu-189. The helical transmembrane segment at 197-218 threads the bilayer; it reads FHMLGVAGVFGGSLFSAMHGSL. His-198 lines the chlorophyll a pocket. A quinone is bound by residues His-215 and 264–265; that span reads SF. His-215 provides a ligand contact to Fe cation. His-272 lines the Fe cation pocket. Residues 274–288 form a helical membrane-spanning segment; it reads FLGAWPVVGIWFTAL. Residues His-332, Glu-333, Asp-342, and Ala-344 each coordinate [CaMn4O5] cluster. The propeptide occupies 345–360; sequence AGEQAPVALQAPAING.

It belongs to the reaction center PufL/M/PsbA/D family. In terms of assembly, PSII is composed of 1 copy each of membrane proteins PsbA, PsbB, PsbC, PsbD, PsbE, PsbF, PsbH, PsbI, PsbJ, PsbK, PsbL, PsbM, PsbT, PsbX, PsbY, PsbZ, Psb30/Ycf12, peripheral proteins PsbO, CyanoQ (PsbQ), PsbU, PsbV and a large number of cofactors. It forms dimeric complexes. It depends on The D1/D2 heterodimer binds P680, chlorophylls that are the primary electron donor of PSII, and subsequent electron acceptors. It shares a non-heme iron and each subunit binds pheophytin, quinone, additional chlorophylls, carotenoids and lipids. D1 provides most of the ligands for the Mn4-Ca-O5 cluster of the oxygen-evolving complex (OEC). There is also a Cl(-1) ion associated with D1 and D2, which is required for oxygen evolution. The PSII complex binds additional chlorophylls, carotenoids and specific lipids. as a cofactor. Tyr-161 forms a radical intermediate that is referred to as redox-active TyrZ, YZ or Y-Z. In terms of processing, C-terminally processed by CtpA; processing is essential to allow assembly of the oxygen-evolving complex and thus photosynthetic growth.

It localises to the cellular thylakoid membrane. It catalyses the reaction 2 a plastoquinone + 4 hnu + 2 H2O = 2 a plastoquinol + O2. Functionally, photosystem II (PSII) is a light-driven water:plastoquinone oxidoreductase that uses light energy to abstract electrons from H(2)O, generating O(2) and a proton gradient subsequently used for ATP formation. It consists of a core antenna complex that captures photons, and an electron transfer chain that converts photonic excitation into a charge separation. The D1/D2 (PsbA/PsbD) reaction center heterodimer binds P680, the primary electron donor of PSII as well as several subsequent electron acceptors. The chain is Photosystem II protein D1 1 from Picosynechococcus sp. (strain ATCC 27264 / PCC 7002 / PR-6) (Agmenellum quadruplicatum).